A 399-amino-acid chain; its full sequence is Elongation factor Tu (399 aa).

The 200-residue stretch at 10-209 (KPHVNIGTIG…EVDRYIPTPE (200 aa)) folds into the tr-type G domain. The tract at residues 19–26 (GHVDHGKT) is G1. Residue 19 to 26 (GHVDHGKT) coordinates GTP. Residue T26 coordinates Mg(2+). Residues 60–64 (GITIA) are G2. Positions 81–84 (DCPG) are G3. GTP-binding positions include 81–85 (DCPGH) and 136–139 (NKED). The interval 136 to 139 (NKED) is G4. The interval 174 to 176 (SAL) is G5.

This sequence belongs to the TRAFAC class translation factor GTPase superfamily. Classic translation factor GTPase family. EF-Tu/EF-1A subfamily. Monomer.

The protein localises to the cytoplasm. It catalyses the reaction GTP + H2O = GDP + phosphate + H(+). Its function is as follows. GTP hydrolase that promotes the GTP-dependent binding of aminoacyl-tRNA to the A-site of ribosomes during protein biosynthesis. This Wolinella succinogenes (strain ATCC 29543 / DSM 1740 / CCUG 13145 / JCM 31913 / LMG 7466 / NCTC 11488 / FDC 602W) (Vibrio succinogenes) protein is Elongation factor Tu.